A 674-amino-acid chain; its full sequence is DNA mismatch repair protein MutL (674 aa).

Belongs to the DNA mismatch repair MutL/HexB family.

Its function is as follows. This protein is involved in the repair of mismatches in DNA. It is required for dam-dependent methyl-directed DNA mismatch repair. May act as a 'molecular matchmaker', a protein that promotes the formation of a stable complex between two or more DNA-binding proteins in an ATP-dependent manner without itself being part of a final effector complex. This is DNA mismatch repair protein MutL from Clostridium perfringens (strain 13 / Type A).